A 125-amino-acid polypeptide reads, in one-letter code: Protein Turandot F (125 aa).

The signal sequence occupies residues 1-19; that stretch reads MKTVILFGFLLALLGYLEA.

It belongs to the Turandot family.

The protein resides in the secreted. In terms of biological role, a humoral factor that may play a role in stress tolerance. In Drosophila melanogaster (Fruit fly), this protein is Protein Turandot F.